Reading from the N-terminus, the 51-residue chain is UPF0391 membrane protein PsycPRwf_2202 (51 aa).

Transmembrane regions (helical) follow at residues 6 to 26 (IIFA…VAGL) and 27 to 47 (SQNF…IGFI).

It belongs to the UPF0391 family.

It localises to the cell membrane. This Psychrobacter sp. (strain PRwf-1) protein is UPF0391 membrane protein PsycPRwf_2202.